The primary structure comprises 246 residues: UPF0758 protein SSU98_1084 (246 aa).

The region spanning 103-225 (RILGSEKLGR…YYSFREESDV (123 aa)) is the MPN domain. Positions 174, 176, and 187 each coordinate Zn(2+). The JAMM motif signature appears at 174 to 187 (HNHPSGSVQPSRND).

The protein belongs to the UPF0758 family.

The protein is UPF0758 protein SSU98_1084 of Streptococcus suis (strain 98HAH33).